Consider the following 129-residue polypeptide: Small ribosomal subunit protein uS13 (129 aa).

The segment covering His92 to Arg114 has biased composition (basic residues). The interval His92–Lys129 is disordered.

Belongs to the universal ribosomal protein uS13 family. As to quaternary structure, part of the 30S ribosomal subunit. Forms a loose heterodimer with protein S19. Forms two bridges to the 50S subunit in the 70S ribosome.

Functionally, located at the top of the head of the 30S subunit, it contacts several helices of the 16S rRNA. In the 70S ribosome it contacts the 23S rRNA (bridge B1a) and protein L5 of the 50S subunit (bridge B1b), connecting the 2 subunits; these bridges are implicated in subunit movement. Contacts the tRNAs in the A and P-sites. This Dehalococcoides mccartyi (strain ATCC BAA-2266 / KCTC 15142 / 195) (Dehalococcoides ethenogenes (strain 195)) protein is Small ribosomal subunit protein uS13.